Here is a 232-residue protein sequence, read N- to C-terminus: MGSVLSTDSGKSAPASATARALERRRDPELPVTSFDCAVCLEVLHQPVRTRCGHVFCRSCIATSLKNNKWTCPYCRAYLPSEGVPATDVAKRMKSEYKNCAECDTLVCLSEMRAHIRTCQKYIDKYGPLQELEETAARCVCPFCQRELYEDSLLDHCITHHRSERRPVFCPLCRLIPDENPSSFSGSLIRHLQVSHTLFYDDFIDFNIIEEALIRRVLDRSLLEYVNHSNTT.

Residues 1 to 10 (MGSVLSTDSG) show a composition bias toward polar residues. Residues 1–23 (MGSVLSTDSGKSAPASATARALE) form a disordered region. Gly2 carries N-myristoyl glycine lipidation. Zn(2+)-binding residues include Cys37 and Cys40. The RING-type zinc finger occupies 37–76 (CAVCLEVLHQPVRTRCGHVFCRSCIATSLKNNKWTCPYCR). The interaction with the C2HC RNF-type zinc finger stretch occupies residues 43–45 (VLH). Cys52, His54, Cys57, Cys60, Cys72, Cys75, Cys100, and Cys103 together coordinate Zn(2+). The segment at 100 to 119 (CAECDTLVCLSEMRAHIRTC) adopts a C2HC RNF-type zinc-finger fold. The interaction with the RING-type zinc finger stretch occupies residues 109-113 (LSEMR). Zn(2+)-binding residues include His115 and Cys119. Residues 120–128 (QKYIDKYGP) are linker region. The interval 210–224 (EEALIRRVLDRSLLE) is required for interaction with ubiquitin and for autoubiquitination.

As to quaternary structure, interacts with UBE2D1. Interacts with VCP/p97; leading to recruit RNF125 to RIGI and promote ubiquitination of RIGI. Post-translationally, autoubiquitinated, leading to its subsequent proteasomal degradation. Predominantly expressed in lymphoid tissues, including bone marrow, spleen and thymus. Also weakly expressed in other tissues. Predominant in the CD4(+) and CD8(+) T-cells, suggesting that it is preferentially confined to T-cells.

The protein localises to the golgi apparatus membrane. It catalyses the reaction S-ubiquitinyl-[E2 ubiquitin-conjugating enzyme]-L-cysteine + [acceptor protein]-L-lysine = [E2 ubiquitin-conjugating enzyme]-L-cysteine + N(6)-ubiquitinyl-[acceptor protein]-L-lysine.. It participates in protein modification; protein ubiquitination. Its function is as follows. E3 ubiquitin-protein ligase that mediates ubiquitination and subsequent proteasomal degradation of target proteins, such as RIGI, MAVS/IPS1, IFIH1/MDA5, JAK1 and p53/TP53. Acts as a negative regulator of type I interferon production by mediating ubiquitination of RIGI at 'Lys-181', leading to RIGI degradation. Mediates ubiquitination and subsequent degradation of p53/TP53. Mediates ubiquitination and subsequent degradation of JAK1. Acts as a positive regulator of T-cell activation. The chain is E3 ubiquitin-protein ligase RNF125 from Homo sapiens (Human).